We begin with the raw amino-acid sequence, 374 residues long: Chorismate synthase (374 aa).

R55 is a binding site for NADP(+). FMN contacts are provided by residues 132–134 (RGS), G293, 308–312 (KPTPS), and R335.

The protein belongs to the chorismate synthase family. FMNH2 is required as a cofactor.

It catalyses the reaction 5-O-(1-carboxyvinyl)-3-phosphoshikimate = chorismate + phosphate. It participates in metabolic intermediate biosynthesis; chorismate biosynthesis; chorismate from D-erythrose 4-phosphate and phosphoenolpyruvate: step 7/7. Catalyzes the anti-1,4-elimination of the C-3 phosphate and the C-6 proR hydrogen from 5-enolpyruvylshikimate-3-phosphate (EPSP) to yield chorismate, which is the branch point compound that serves as the starting substrate for the three terminal pathways of aromatic amino acid biosynthesis. This reaction introduces a second double bond into the aromatic ring system. The chain is Chorismate synthase from Methanothermobacter thermautotrophicus (strain ATCC 29096 / DSM 1053 / JCM 10044 / NBRC 100330 / Delta H) (Methanobacterium thermoautotrophicum).